The primary structure comprises 140 residues: Protein ARABIDOPSIS THALIANA ANTHER 7 (140 aa).

The N-terminal stretch at Met-1–Ser-20 is a signal peptide. Cystine bridges form between Cys-29–Cys-87, Cys-39–Cys-54, Cys-55–Cys-111, and Cys-85–Cys-125.

This sequence belongs to the plant LTP family. As to expression, tapetum-specific. Also present in pollen.

The protein resides in the endoplasmic reticulum lumen. This is Protein ARABIDOPSIS THALIANA ANTHER 7 from Arabidopsis thaliana (Mouse-ear cress).